Reading from the N-terminus, the 505-residue chain is RNA-splicing ligase RtcB homolog (505 aa).

Positions 119, 122, 227, 259, and 353 each coordinate Mn(2+). 226-230 (NHYAE) contributes to the GMP binding site. GMP is bound by residues 353–354 (HN), 402–405 (GGSM), S409, 428–431 (HGAG), and K504. The active-site GMP-histidine intermediate is the H428.

Belongs to the RtcB family. In terms of assembly, catalytic component of the tRNA-splicing ligase complex. The cofactor is Mn(2+).

It is found in the nucleus. Its subcellular location is the cytoplasm. The enzyme catalyses a 3'-end 3'-phospho-ribonucleotide-RNA + a 5'-end dephospho-ribonucleoside-RNA + GTP = a ribonucleotidyl-ribonucleotide-RNA + GMP + diphosphate. It catalyses the reaction a 3'-end 2',3'-cyclophospho-ribonucleotide-RNA + a 5'-end dephospho-ribonucleoside-RNA + GTP + H2O = a ribonucleotidyl-ribonucleotide-RNA + GMP + diphosphate + H(+). Its function is as follows. Catalytic subunit of the tRNA-splicing ligase complex that acts by directly joining spliced tRNA halves to mature-sized tRNAs. Required for the ligation of mRNAs and specifically, regulates xbp-1 mRNA splicing during the endoplasmic reticulum stress-induced unfolded protein response. Has a neuroprotective role in the age-dependent degeneration of dopamine neurons, which is mediated by xbp-1. The protein is RNA-splicing ligase RtcB homolog of Caenorhabditis elegans.